Reading from the N-terminus, the 1070-residue chain is Regulator of Ty1 transposition protein 107 (1070 aa).

BRCT domains are found at residues 2–103 (STSL…QDSV), 117–213 (NPFH…LYHF), 260–352 (HPNK…FYMF), and 369–453 (PFHA…EQCY). The residue at position 304 (serine 304) is a Phosphoserine. Phosphothreonine is present on threonine 532. The interval 572-659 (SRASFPVVDS…LQVQLGQRTK (88 aa)) is disordered. Residues 580–592 (DSKKSNLQKKDSN) are compositionally biased toward basic and acidic residues. Phosphoserine occurs at positions 591 and 593. Basic and acidic residues-rich tracts occupy residues 603 to 615 (CEGH…KEFT) and 622 to 645 (DAPK…KKEE). Position 720 is a phosphoserine (serine 720). Residues 722–731 (NDDHINDEKP) are compositionally biased toward basic and acidic residues. Positions 722–753 (NDDHINDEKPAVNSKYTTPKTSQNITSGVDTP) are disordered. Over residues 735 to 753 (SKYTTPKTSQNITSGVDTP) the composition is skewed to polar residues. Serine 800 and serine 806 each carry phosphoserine. BRCT domains are found at residues 829–910 (FNEL…IDLL) and 934–1049 (GINE…CVES).

Forms a complex with the cullin-RING ligase (CRL) RTT101(MMS1-MMS22). Interacts with MMS22 and RTT101. Interacts with histone H2A; requires H2A to be phosphorylated (gamma-H2A). Interacts with RAD55. Phosphorylated by MEC1.

It is found in the nucleus. Its function is as follows. Required for resumption of chromosome replication after DNA damage, specifically in S phase. Is recruited to chromatin in the presence of RTT109 and RTT101 in response to stalled replication forks and acts as a scaffold during DNA repair. This is Regulator of Ty1 transposition protein 107 (RTT107) from Saccharomyces cerevisiae (strain ATCC 204508 / S288c) (Baker's yeast).